The following is a 174-amino-acid chain: NADH-ubiquinone oxidoreductase chain 6 (174 aa).

6 helical membrane passes run 1-21, 24-44, 47-67, 86-106, 111-131, and 151-171; these read MTYA…GFSS, SPIY…AIIL, GGGY…MVVF, VEVL…VLWV, GMVV…EGEG, and WLVV…IEIA.

This sequence belongs to the complex I subunit 6 family. Core subunit of respiratory chain NADH dehydrogenase (Complex I) which is composed of 45 different subunits.

It localises to the mitochondrion inner membrane. The enzyme catalyses a ubiquinone + NADH + 5 H(+)(in) = a ubiquinol + NAD(+) + 4 H(+)(out). In terms of biological role, core subunit of the mitochondrial membrane respiratory chain NADH dehydrogenase (Complex I) which catalyzes electron transfer from NADH through the respiratory chain, using ubiquinone as an electron acceptor. Essential for the catalytic activity and assembly of complex I. The protein is NADH-ubiquinone oxidoreductase chain 6 (MT-ND6) of Pan troglodytes (Chimpanzee).